Reading from the N-terminus, the 299-residue chain is Serpentine receptor class gamma-30 (299 aa).

7 consecutive transmembrane segments (helical) span residues 18–38, 59–79, 98–118, 137–157, 189–209, 223–243, and 260–280; these read GIQF…IKVL, ILSV…NYIP, ILFI…FMVV, IIPH…WTAF, IISS…MLCI, LTAS…MNIY, and ALTA…MLCL.

It belongs to the nematode receptor-like protein srg family.

The protein resides in the membrane. This chain is Serpentine receptor class gamma-30 (srg-30), found in Caenorhabditis elegans.